A 577-amino-acid polypeptide reads, in one-letter code: Proline--tRNA ligase (577 aa).

Belongs to the class-II aminoacyl-tRNA synthetase family. ProS type 1 subfamily. As to quaternary structure, homodimer.

Its subcellular location is the cytoplasm. The enzyme catalyses tRNA(Pro) + L-proline + ATP = L-prolyl-tRNA(Pro) + AMP + diphosphate. Catalyzes the attachment of proline to tRNA(Pro) in a two-step reaction: proline is first activated by ATP to form Pro-AMP and then transferred to the acceptor end of tRNA(Pro). As ProRS can inadvertently accommodate and process non-cognate amino acids such as alanine and cysteine, to avoid such errors it has two additional distinct editing activities against alanine. One activity is designated as 'pretransfer' editing and involves the tRNA(Pro)-independent hydrolysis of activated Ala-AMP. The other activity is designated 'posttransfer' editing and involves deacylation of mischarged Ala-tRNA(Pro). The misacylated Cys-tRNA(Pro) is not edited by ProRS. The chain is Proline--tRNA ligase from Thermotoga sp. (strain RQ2).